The sequence spans 251 residues: NADH-quinone oxidoreductase subunit B (251 aa).

Residues Cys38, Cys39, Cys104, and Cys134 each contribute to the [4Fe-4S] cluster site. The disordered stretch occupies residues 208–251; it reads RKGLPPGSMTDVGWIPPEARERLKAGRGAGASGSGEREEGKEGA. Residues 242-251 are compositionally biased toward basic and acidic residues; that stretch reads GEREEGKEGA.

The protein belongs to the complex I 20 kDa subunit family. In terms of assembly, NDH-1 is composed of 14 different subunits. Subunits NuoB, C, D, E, F, and G constitute the peripheral sector of the complex. [4Fe-4S] cluster serves as cofactor.

The protein localises to the cell membrane. The enzyme catalyses a quinone + NADH + 5 H(+)(in) = a quinol + NAD(+) + 4 H(+)(out). NDH-1 shuttles electrons from NADH, via FMN and iron-sulfur (Fe-S) centers, to quinones in the respiratory chain. The immediate electron acceptor for the enzyme in this species is believed to be a menaquinone. Couples the redox reaction to proton translocation (for every two electrons transferred, four hydrogen ions are translocated across the cytoplasmic membrane), and thus conserves the redox energy in a proton gradient. The chain is NADH-quinone oxidoreductase subunit B from Rubrobacter xylanophilus (strain DSM 9941 / JCM 11954 / NBRC 16129 / PRD-1).